We begin with the raw amino-acid sequence, 87 residues long: U3-theraphotoxin-Hhn1b (87 aa).

A signal peptide spans 1–24; it reads MVNMKASMFLTFAGLVLLFVVCYA. Positions 25–52 are excised as a propeptide; that stretch reads SESEEKEFPREMLSSIFAVDNDFKQEER. 2 disulfides stabilise this stretch: Cys54–Cys67 and Cys61–Cys72.

Belongs to the neurotoxin 10 (Hwtx-1) family. 51 (Hntx-8) subfamily. Hntx-8 sub-subfamily. As to expression, expressed by the venom gland.

Its subcellular location is the secreted. Ion channel inhibitor. The protein is U3-theraphotoxin-Hhn1b of Cyriopagopus hainanus (Chinese bird spider).